A 111-amino-acid polypeptide reads, in one-letter code: Cell division protein FtsB (111 aa).

Residues 1-3 (MRL) are Cytoplasmic-facing. Residues 4 to 21 (ITLFLLLLLLAIQYPLWL) traverse the membrane as a helical segment. The Periplasmic segment spans residues 22-111 (GKGGWLRVWD…PPPAGQQAHH (90 aa)). Residues 31 to 64 (DMQKQVTAQNQRNAELKQRNTKLEGEVKDLKEGT) are a coiled coil. Residues 89-111 (APAPKTSETPLPPPPPAGQQAHH) form a disordered region.

Belongs to the FtsB family. Part of a complex composed of FtsB, FtsL and FtsQ.

It localises to the cell inner membrane. Essential cell division protein. May link together the upstream cell division proteins, which are predominantly cytoplasmic, with the downstream cell division proteins, which are predominantly periplasmic. The chain is Cell division protein FtsB from Ralstonia pickettii (strain 12J).